Here is a 486-residue protein sequence, read N- to C-terminus: Transcriptional regulator ERG (486 aa).

Positions 41–54 are enriched in polar residues; that stretch reads TASSSSDYGQTSKM. Disordered regions lie at residues 41-62 and 79-99; these read TASSSSDYGQTSKMSPRVPQQD and PSQVNGSRNSPDECSVNKGGK. Residues Ser55, Ser88, and Ser103 each carry the phosphoserine modification. The PNT domain occupies 120 to 206; it reads VPPPNMTTNE…SHLHYLRETP (87 aa). The segment at 249-311 is disordered; that stretch reads QRITTRPDLP…ILGPTSSRLA (63 aa). Positions 271 to 284 are enriched in polar residues; the sequence is SHLTPQSKAAQPSP. Residue Lys289 forms a Glycyl lysine isopeptide (Lys-Gly) (interchain with G-Cter in SUMO2) linkage. A DNA-binding region (ETS) is located at residues 318–398; sequence IQLWQFLLEL…HGKRYAYKFD (81 aa).

Belongs to the ETS family. As to quaternary structure, identified in a IGF2BP1-dependent mRNP granule complex containing untranslated mRNAs. Interacts with SETDB1.

The protein resides in the nucleus. The protein localises to the cytoplasm. In terms of biological role, transcriptional regulator. May participate in transcriptional regulation through the recruitment of SETDB1 histone methyltransferase and subsequent modification of local chromatin structure. This is Transcriptional regulator ERG (Erg) from Mus musculus (Mouse).